Reading from the N-terminus, the 115-residue chain is Photosystem II reaction center Psb28 protein (115 aa).

Belongs to the Psb28 family. In terms of assembly, part of the photosystem II complex.

Its subcellular location is the plastid. The protein resides in the chloroplast thylakoid membrane. The sequence is that of Photosystem II reaction center Psb28 protein from Trieres chinensis (Marine centric diatom).